Reading from the N-terminus, the 144-residue chain is MIPIKFKGRTISRGCAEGEVLISRDPISFLGSVDPRTGIVVEEKHSLAGKSIKGKVLVFPHGKGSTVGSYVMYQLKKNEAAPAAIINLETEPIVAVGAIISEIPLVDMLEKDPYEFLKDGDTVLVNGSEGYIELLKQGEGQAKK.

S65 functions as the Proton acceptor in the catalytic mechanism.

It belongs to the AcnX type II small subunit family. Heterodimer composed of a large subunit (PMDh-L) and a small subunit (PMDh-S).

It catalyses the reaction (R)-5-phosphomevalonate = (2E)-3-methyl-5-phosphooxypent-2-enoate + H2O. The protein operates within isoprenoid biosynthesis; isopentenyl diphosphate biosynthesis via mevalonate pathway. Component of a hydro-lyase that catalyzes the dehydration of mevalonate 5-phosphate (MVA5P) to form trans-anhydromevalonate 5-phosphate (tAHMP). Involved in the archaeal mevalonate (MVA) pathway, which provides fundamental precursors for isoprenoid biosynthesis, such as isopentenyl diphosphate (IPP) and dimethylallyl diphosphate (DMAPP). This is Phosphomevalonate dehydratase small subunit from Methanosarcina mazei (strain ATCC BAA-159 / DSM 3647 / Goe1 / Go1 / JCM 11833 / OCM 88) (Methanosarcina frisia).